Here is a 79-residue protein sequence, read N- to C-terminus: RNA-binding protein Hfq (79 aa).

One can recognise a Sm domain in the interval 10 to 70; the sequence is DVFLNTVRKQ…ISTIMPGQPV (61 aa).

It belongs to the Hfq family. Homohexamer.

In terms of biological role, RNA chaperone that binds small regulatory RNA (sRNAs) and mRNAs to facilitate mRNA translational regulation in response to envelope stress, environmental stress and changes in metabolite concentrations. Also binds with high specificity to tRNAs. This is RNA-binding protein Hfq from Bartonella quintana (strain Toulouse) (Rochalimaea quintana).